The sequence spans 275 residues: Large ribosomal subunit protein uL2 (275 aa).

Residues 222–275 (GVAMNPVDHPHGGGEGRNKGRHPTSPWGQKSKGLKTRNNKRTDSMIIRRRAKKK) form a disordered region. The segment covering 229–239 (DHPHGGGEGRN) has biased composition (basic and acidic residues).

It belongs to the universal ribosomal protein uL2 family. Part of the 50S ribosomal subunit. Forms a bridge to the 30S subunit in the 70S ribosome.

In terms of biological role, one of the primary rRNA binding proteins. Required for association of the 30S and 50S subunits to form the 70S ribosome, for tRNA binding and peptide bond formation. It has been suggested to have peptidyltransferase activity; this is somewhat controversial. Makes several contacts with the 16S rRNA in the 70S ribosome. The sequence is that of Large ribosomal subunit protein uL2 from Psychrobacter arcticus (strain DSM 17307 / VKM B-2377 / 273-4).